We begin with the raw amino-acid sequence, 114 residues long: Hydrogenase maturation factor HypA (114 aa).

H2 contributes to the Ni(2+) binding site. Zn(2+) contacts are provided by C73, C76, C90, and C93.

Belongs to the HypA/HybF family.

Its function is as follows. Involved in the maturation of [NiFe] hydrogenases. Required for nickel insertion into the metal center of the hydrogenase. This chain is Hydrogenase maturation factor HypA, found in Chloroflexus aggregans (strain MD-66 / DSM 9485).